A 460-amino-acid polypeptide reads, in one-letter code: A-type ATP synthase subunit B (460 aa).

It belongs to the ATPase alpha/beta chains family. As to quaternary structure, has multiple subunits with at least A(3), B(3), C, D, E, F, H, I and proteolipid K(x).

It is found in the cell membrane. Functionally, component of the A-type ATP synthase that produces ATP from ADP in the presence of a proton gradient across the membrane. The B chain is a regulatory subunit. The polypeptide is A-type ATP synthase subunit B (Methanosarcina acetivorans (strain ATCC 35395 / DSM 2834 / JCM 12185 / C2A)).